We begin with the raw amino-acid sequence, 462 residues long: Elongation factor 1-alpha (462 aa).

Glycine 2 bears the N,N,N-trimethylglycine mark. An N6,N6-dimethyllysine; alternate modification is found at lysine 3. Position 3 is an N6-methyllysine; alternate (lysine 3). The 238-residue stretch at 5 to 242 folds into the tr-type G domain; it reads KAHVNVVVIG…DAIEPPVRPS (238 aa). A G1 region spans residues 14-21; that stretch reads GHVDSGKS. 14 to 21 provides a ligand contact to GTP; it reads GHVDSGKS. Residue lysine 30 is modified to N6-methyllysine. Residues 70-74 form a G2 region; that stretch reads GITID. At lysine 79 the chain carries N6,N6,N6-trimethyllysine. Residues 91 to 94 form a G3 region; the sequence is DAPG. Residues 91 to 95 and 153 to 156 contribute to the GTP site; these read DAPGH and NKMD. Positions 153–156 are G4; that stretch reads NKMD. The segment at 192–194 is G5; that stretch reads SGW. An N6,N6-dimethyllysine; alternate modification is found at lysine 318. An N6-methyllysine; alternate modification is found at lysine 318. Residue lysine 392 is modified to N6-methyllysine.

The protein belongs to the TRAFAC class translation factor GTPase superfamily. Classic translation factor GTPase family. EF-Tu/EF-1A subfamily.

It is found in the cytoplasm. This protein promotes the GTP-dependent binding of aminoacyl-tRNA to the A-site of ribosomes during protein biosynthesis. This is Elongation factor 1-alpha (TEF1) from Serendipita indica (Root endophyte fungus).